The primary structure comprises 122 residues: Basic phospholipase A2 homolog (122 aa).

Intrachain disulfides connect cysteine 26–cysteine 115, cysteine 28–cysteine 44, cysteine 43–cysteine 95, cysteine 49–cysteine 122, cysteine 50–cysteine 88, cysteine 57–cysteine 81, and cysteine 75–cysteine 86. The interval 105-117 is important for membrane-damaging activities in eukaryotes and bacteria; heparin-binding; sequence KRYMTYPNILCSS.

It belongs to the phospholipase A2 family. Group II subfamily. N49 sub-subfamily. As to expression, expressed by the venom gland.

The protein resides in the secreted. The chain is Basic phospholipase A2 homolog from Gloydius halys (Chinese water mocassin).